The primary structure comprises 116 residues: NADH-ubiquinone oxidoreductase chain 3 (116 aa).

3 helical membrane passes run 3 to 23 (LITT…TISF), 56 to 76 (FFLI…LLPL), and 85 to 105 (PALT…GLIY).

Belongs to the complex I subunit 3 family.

The protein localises to the mitochondrion membrane. The enzyme catalyses a ubiquinone + NADH + 5 H(+)(in) = a ubiquinol + NAD(+) + 4 H(+)(out). Functionally, core subunit of the mitochondrial membrane respiratory chain NADH dehydrogenase (Complex I) that is believed to belong to the minimal assembly required for catalysis. Complex I functions in the transfer of electrons from NADH to the respiratory chain. The immediate electron acceptor for the enzyme is believed to be ubiquinone. The polypeptide is NADH-ubiquinone oxidoreductase chain 3 (MT-ND3) (Oncorhynchus masou (Cherry salmon)).